Consider the following 66-residue polypeptide: UPF0391 membrane protein AM1_5042 (66 aa).

The next 2 helical transmembrane spans lie at Leu-4–Ala-24 and Ala-28–Pro-47.

It belongs to the UPF0391 family.

It localises to the cell membrane. This Acaryochloris marina (strain MBIC 11017) protein is UPF0391 membrane protein AM1_5042.